The primary structure comprises 614 residues: ATP-dependent RNA helicase dbp-3 (614 aa).

The disordered stretch occupies residues 1 to 138 (MSSTKKHSRS…GTTTPAASTN (138 aa)). Positions 9-36 (RSEGEEKDARLAKKVKTDETPVDGEVKK) are enriched in basic and acidic residues. 2 stretches are compositionally biased toward basic residues: residues 37–58 (ERKK…KSKK) and 91–109 (KKEK…KKAK). Residues 117–138 (EESTSASKATTNGTTTPAASTN) show a composition bias toward low complexity. Residues 180-207 (MNFSQLPQSNLISKNPFAAYTNPTPIQS) carry the Q motif motif. A Helicase ATP-binding domain is found at 210 to 394 (WPFSLSGRDV…ESYMINPAQV (185 aa)). 223–230 (AETGSGKT) contacts ATP. A DEAD box motif is present at residues 340 to 343 (DEAD). In terms of domain architecture, Helicase C-terminal spans 435–584 (RLYELLKEAQ…PVPEELLKFG (150 aa)).

It belongs to the DEAD box helicase family. DDX5/DBP2 subfamily.

Its subcellular location is the nucleus. It is found in the nucleolus. The catalysed reaction is ATP + H2O = ADP + phosphate + H(+). Functionally, ATP-dependent RNA helicase required for 60S ribosomal subunit synthesis. Involved in efficient pre-rRNA processing, predominantly at site A3, which is necessary for the normal formation of 25S and 5.8S rRNAs. This chain is ATP-dependent RNA helicase dbp-3 (dbp-3), found in Neurospora crassa (strain ATCC 24698 / 74-OR23-1A / CBS 708.71 / DSM 1257 / FGSC 987).